The chain runs to 589 residues: Protein PAF1 homolog (589 aa).

Residues 1–54 show a composition bias toward pro residues; the sequence is MASYRPPYPPLPQPPSQNSLAPPPPPPSLPPPVPPPPPSHQPYSYPPPPPPPPH. Disordered stretches follow at residues 1-180 and 542-589; these read MASY…PLLT and GVYS…DYSE. Over residues 55 to 65 the composition is skewed to low complexity; sequence AYYQQGPHYPQ. Positions 71 to 87 are enriched in pro residues; the sequence is APPPPPPPSAPPPLVPD. The segment covering 88–116 has biased composition (basic and acidic residues); the sequence is PPRHQGPNDHEKGASKQVGRRERAKPDPS. Residues 117–127 show a composition bias toward basic residues; that stretch reads KHHHRSHLPHS. Residues 126-159 adopt a coiled-coil conformation; that stretch reads HSKKIETEEERRLRKKRELEKQRQDEKHRQQMKN. Residues 128–154 show a composition bias toward basic and acidic residues; the sequence is KKIETEEERRLRKKRELEKQRQDEKHR.

Belongs to the PAF1 family. Component of the nuclear PAF1 complex (PAF1C), which consists of VIP2/ELF7/PAF1, VIP3/SKI8/WDR61, VIP4/LEO1, VIP5/RTF1, VIP6/ELF8/CTR9 and CDC73. Expressed in roots, leaves and shoot apex.

Its subcellular location is the nucleus. In terms of biological role, component of the PAF1 complex (PAF1C) which is involved in histone modifications such as methylation on histone H3 'Lys-4' (H3K4me3). Involved in regulation of flowering time. Required for the expression of the flowering repressors and MAD-box genes FLC, AGL27/FLM and AGL31/MAF2. Required for histone H3 trimethylation on 'Lys-4' H3K4me3 at the FLC and AGL27/FLM loci. Involved in the control of seed dormancy and germination. The polypeptide is Protein PAF1 homolog (Arabidopsis thaliana (Mouse-ear cress)).